A 255-amino-acid chain; its full sequence is MAVISMKQLLEAGVHFGHQTRRWNPKMKKYIFTERNGIYIIDLQKTVRKVDEAYNFLKQVSEDGGQVLFVGTKKQAQESVKSEAERAGQFYINQRWLGGLLTNYKTISKRIKRISEIEKMEEDGLFEVLPKKEVVELKKEYDRLIKFLGGIRDMKSMPQALFVVDPRKERNAIAEARKLNIPIVGIVDTNCDPDEIDYVIPANDDAIRAVKLLTAKMADAILEGQQGVSNEEVAAEQNIDLDEKEKSEETEATEE.

The tract at residues 226 to 255 (QGVSNEEVAAEQNIDLDEKEKSEETEATEE) is disordered.

The protein belongs to the universal ribosomal protein uS2 family.

The chain is Small ribosomal subunit protein uS2 from Staphylococcus aureus (strain JH1).